Here is a 255-residue protein sequence, read N- to C-terminus: MEVYLMVRIMLVGCNGKMGRIITHCSKDFNDIEIVAGVDKSSTSNLDFPVFENIHSSSVECDVVLDFSRPSSLKSLISYCTEKKLPLVLCTTGYSKEELNLIEETSKNIPIFKSANMSIGINVINSLLKDISKKLYKDFDIEIIEKHHNQKVDSPSGTALLLADTIKDNVPEKLEYIYGRSGHSKRTKNEIGIHAIRGGSIVGDHDVIFAGIGECIEIKHTAISREVFAIGALKASAFMKGKPSGMYNMDCMLNS.

NAD(+) is bound by residues 13 to 18, 90 to 92, and 114 to 117; these read GCNGKM, CTT, and SANM. The active-site Proton donor/acceptor is the His-147. His-148 serves as a coordination point for (S)-2,3,4,5-tetrahydrodipicolinate. The active-site Proton donor is Lys-151. (S)-2,3,4,5-tetrahydrodipicolinate is bound at residue 157–158; it reads GT.

It belongs to the DapB family.

Its subcellular location is the cytoplasm. The catalysed reaction is (S)-2,3,4,5-tetrahydrodipicolinate + NAD(+) + H2O = (2S,4S)-4-hydroxy-2,3,4,5-tetrahydrodipicolinate + NADH + H(+). It catalyses the reaction (S)-2,3,4,5-tetrahydrodipicolinate + NADP(+) + H2O = (2S,4S)-4-hydroxy-2,3,4,5-tetrahydrodipicolinate + NADPH + H(+). Its pathway is amino-acid biosynthesis; L-lysine biosynthesis via DAP pathway; (S)-tetrahydrodipicolinate from L-aspartate: step 4/4. Catalyzes the conversion of 4-hydroxy-tetrahydrodipicolinate (HTPA) to tetrahydrodipicolinate. The chain is 4-hydroxy-tetrahydrodipicolinate reductase from Clostridium tetani (strain Massachusetts / E88).